Consider the following 54-residue polypeptide: Large ribosomal subunit protein eL37 (54 aa).

Zn(2+)-binding residues include C20, C23, C35, and C38. The segment at 20–38 (CRRCGHHTYNVRTKRCSHC) adopts a C4-type zinc-finger fold.

It belongs to the eukaryotic ribosomal protein eL37 family. Zn(2+) serves as cofactor.

Its function is as follows. Binds to the 23S rRNA. The sequence is that of Large ribosomal subunit protein eL37 (rpl37e) from Thermoplasma volcanium (strain ATCC 51530 / DSM 4299 / JCM 9571 / NBRC 15438 / GSS1).